Consider the following 156-residue polypeptide: Small ribosomal subunit protein uS7 (156 aa).

Belongs to the universal ribosomal protein uS7 family. As to quaternary structure, part of the 30S ribosomal subunit. Contacts proteins S9 and S11.

In terms of biological role, one of the primary rRNA binding proteins, it binds directly to 16S rRNA where it nucleates assembly of the head domain of the 30S subunit. Is located at the subunit interface close to the decoding center, probably blocks exit of the E-site tRNA. This is Small ribosomal subunit protein uS7 from Nitrosomonas eutropha (strain DSM 101675 / C91 / Nm57).